We begin with the raw amino-acid sequence, 331 residues long: Ribosomal RNA small subunit methyltransferase H (331 aa).

S-adenosyl-L-methionine is bound by residues 38–40 (GGY), aspartate 56, phenylalanine 83, aspartate 100, and glutamine 107. Residues 308 to 331 (TDAPAGPVDPQVLGMPLIPKKGRR) are disordered.

The protein belongs to the methyltransferase superfamily. RsmH family.

Its subcellular location is the cytoplasm. It catalyses the reaction cytidine(1402) in 16S rRNA + S-adenosyl-L-methionine = N(4)-methylcytidine(1402) in 16S rRNA + S-adenosyl-L-homocysteine + H(+). Specifically methylates the N4 position of cytidine in position 1402 (C1402) of 16S rRNA. This chain is Ribosomal RNA small subunit methyltransferase H, found in Cereibacter sphaeroides (strain ATCC 17025 / ATH 2.4.3) (Rhodobacter sphaeroides).